Consider the following 168-residue polypeptide: CASP-like protein 4D1 (168 aa).

The Cytoplasmic portion of the chain corresponds to 1–11 (MAPPPPSLASR). Residues 12–32 (MAALILRILTFIFLIASLVIL) traverse the membrane as a helical segment. Over 33-57 (TTNTATLELDLVEVKVHFKDVYAYR) the chain is Extracellular. Residues 58-78 (YMLATIVIGLAYTVLQIAFTL) traverse the membrane as a helical segment. The Cytoplasmic segment spans residues 79 to 97 (YYVATGNRMMSGDGNLAFD). A helical transmembrane segment spans residues 98-118 (FFGDKVISYILVTGAAAGFAS). The Extracellular segment spans residues 119–144 (TKDIKPVFSGSGDFDAFINKGYASAS). Residues 145–165 (LLLIGFVCTAVLSVFSSYALP) traverse the membrane as a helical segment. At 166-168 (KQV) the chain is on the cytoplasmic side.

Belongs to the Casparian strip membrane proteins (CASP) family. As to quaternary structure, homodimer and heterodimers.

The protein resides in the cell membrane. This is CASP-like protein 4D1 from Ricinus communis (Castor bean).